Consider the following 369-residue polypeptide: Protein-glutamate methylesterase/protein-glutamine glutaminase of group 3 operon (369 aa).

A Response regulatory domain is found at 11-128; that stretch reads RVLIVDDSAA…DLERQEASIR (118 aa). A 4-aspartylphosphate modification is found at Asp-62. Residues 136–168 are disordered; it reads ATETTRRRSQPEPRPLAPGPKLTADEILPARPP. A CheB-type methylesterase domain is found at 170–358; it reads PVPETMPVVC…LDRLAARIME (189 aa). Active-site residues include Ser-183, His-209, and Asp-305.

The protein belongs to the CheB family. In terms of processing, phosphorylated in vitro by CheA2, but not by CheA1. Phosphorylation of the N-terminal regulatory domain activates the methylesterase activity.

It is found in the cytoplasm. The catalysed reaction is [protein]-L-glutamate 5-O-methyl ester + H2O = L-glutamyl-[protein] + methanol + H(+). It catalyses the reaction L-glutaminyl-[protein] + H2O = L-glutamyl-[protein] + NH4(+). Its function is as follows. Involved in chemotaxis. Part of a chemotaxis signal transduction system that modulates chemotaxis in response to various stimuli. Catalyzes the demethylation of specific methylglutamate residues introduced into the chemoreceptors (methyl-accepting chemotaxis proteins or MCP) by CheR. Also mediates the irreversible deamidation of specific glutamine residues to glutamic acid. The sequence is that of Protein-glutamate methylesterase/protein-glutamine glutaminase of group 3 operon (cheB3) from Cereibacter sphaeroides (Rhodobacter sphaeroides).